Consider the following 363-residue polypeptide: Phosphoserine aminotransferase (363 aa).

R42 serves as a coordination point for L-glutamate. Residues 76-77 (GR), W102, T156, D175, and Q198 contribute to the pyridoxal 5'-phosphate site. K199 carries the post-translational modification N6-(pyridoxal phosphate)lysine. Residue 240–241 (NT) coordinates pyridoxal 5'-phosphate.

The protein belongs to the class-V pyridoxal-phosphate-dependent aminotransferase family. SerC subfamily. As to quaternary structure, homodimer. It depends on pyridoxal 5'-phosphate as a cofactor.

It localises to the cytoplasm. It carries out the reaction O-phospho-L-serine + 2-oxoglutarate = 3-phosphooxypyruvate + L-glutamate. The catalysed reaction is 4-(phosphooxy)-L-threonine + 2-oxoglutarate = (R)-3-hydroxy-2-oxo-4-phosphooxybutanoate + L-glutamate. It participates in amino-acid biosynthesis; L-serine biosynthesis; L-serine from 3-phospho-D-glycerate: step 2/3. The protein operates within cofactor biosynthesis; pyridoxine 5'-phosphate biosynthesis; pyridoxine 5'-phosphate from D-erythrose 4-phosphate: step 3/5. Functionally, catalyzes the reversible conversion of 3-phosphohydroxypyruvate to phosphoserine and of 3-hydroxy-2-oxo-4-phosphonooxybutanoate to phosphohydroxythreonine. The chain is Phosphoserine aminotransferase from Shewanella sp. (strain MR-7).